A 450-amino-acid chain; its full sequence is ATP-dependent protease ATPase subunit HslU (450 aa).

ATP contacts are provided by residues Val29, 71 to 76, Asp261, Glu328, and Arg400; that span reads GVGKTE.

The protein belongs to the ClpX chaperone family. HslU subfamily. In terms of assembly, a double ring-shaped homohexamer of HslV is capped on each side by a ring-shaped HslU homohexamer. The assembly of the HslU/HslV complex is dependent on binding of ATP.

It localises to the cytoplasm. ATPase subunit of a proteasome-like degradation complex; this subunit has chaperone activity. The binding of ATP and its subsequent hydrolysis by HslU are essential for unfolding of protein substrates subsequently hydrolyzed by HslV. HslU recognizes the N-terminal part of its protein substrates and unfolds these before they are guided to HslV for hydrolysis. The chain is ATP-dependent protease ATPase subunit HslU from Rickettsia peacockii (strain Rustic).